The sequence spans 344 residues: Uroporphyrinogen decarboxylase (344 aa).

Substrate-binding positions include 26–30 (RQAGR), Asp-76, Tyr-151, Ser-206, and His-321.

The protein belongs to the uroporphyrinogen decarboxylase family. As to quaternary structure, homodimer.

The protein localises to the cytoplasm. It carries out the reaction uroporphyrinogen III + 4 H(+) = coproporphyrinogen III + 4 CO2. It participates in porphyrin-containing compound metabolism; protoporphyrin-IX biosynthesis; coproporphyrinogen-III from 5-aminolevulinate: step 4/4. Functionally, catalyzes the decarboxylation of four acetate groups of uroporphyrinogen-III to yield coproporphyrinogen-III. The sequence is that of Uroporphyrinogen decarboxylase from Sinorhizobium fredii (strain NBRC 101917 / NGR234).